Consider the following 35-residue polypeptide: Photosystem II reaction center protein M (35 aa).

A helical transmembrane segment spans residues 7–27 (GFIATILFVLVPTVFLLILYI).

This sequence belongs to the PsbM family. As to quaternary structure, PSII is composed of 1 copy each of membrane proteins PsbA, PsbB, PsbC, PsbD, PsbE, PsbF, PsbH, PsbI, PsbJ, PsbK, PsbL, PsbM, PsbT, PsbX, PsbY, PsbZ, Psb30/Ycf12, peripheral proteins PsbO, CyanoQ (PsbQ), PsbU, PsbV and a large number of cofactors. It forms dimeric complexes.

The protein localises to the cellular thylakoid membrane. Its function is as follows. One of the components of the core complex of photosystem II (PSII). PSII is a light-driven water:plastoquinone oxidoreductase that uses light energy to abstract electrons from H(2)O, generating O(2) and a proton gradient subsequently used for ATP formation. It consists of a core antenna complex that captures photons, and an electron transfer chain that converts photonic excitation into a charge separation. This subunit is found at the monomer-monomer interface. This is Photosystem II reaction center protein M from Crocosphaera subtropica (strain ATCC 51142 / BH68) (Cyanothece sp. (strain ATCC 51142)).